The following is a 484-amino-acid chain: UDP-glycosyltransferase 73B4 (484 aa).

Catalysis depends on H18, which acts as the Proton acceptor. Residues H18 and N89 each coordinate an anthocyanidin. Residue D129 is the Charge relay of the active site. A356, Q358, H373, W376, N377, S378, and E381 together coordinate UDP-alpha-D-glucose. Residue A396 participates in an anthocyanidin binding. UDP-alpha-D-glucose-binding residues include E397 and Q398.

Belongs to the UDP-glycosyltransferase family. Specifically expressed in roots.

The catalysed reaction is a flavonol + UDP-alpha-D-glucose = a flavonol 3-O-beta-D-glucoside + UDP + H(+). Functionally, possesses quercetin 3-O-glucosyltransferase and low 7-O-glucosyltransferase activities in vitro. Also active in vitro on benzoates and benzoate derivatives. Can detoxify the explosive 2,4,6-trinitrotoluene in plant by forming O- or C-glucose conjugates. This is UDP-glycosyltransferase 73B4 (UGT73B4) from Arabidopsis thaliana (Mouse-ear cress).